The chain runs to 152 residues: Acidic phospholipase A2 (152 aa).

A signal peptide spans 1–21 (MNPAHLLVLSAVCVSLLGASS). Positions 22–27 (IPPQPL) are excised as a propeptide. Disulfide bonds link Cys38-Cys104, Cys54-Cys151, Cys56-Cys72, Cys71-Cys132, Cys78-Cys125, Cys88-Cys118, and Cys111-Cys123. 3 residues coordinate Ca(2+): Tyr55, Gly57, and Gly59. Residue His75 is part of the active site. Residue Asp76 coordinates Ca(2+). The active site involves Asp126.

The protein belongs to the phospholipase A2 family. Group I subfamily. D49 sub-subfamily. The cofactor is Ca(2+). In terms of tissue distribution, expressed by the venom gland.

The protein resides in the secreted. The catalysed reaction is a 1,2-diacyl-sn-glycero-3-phosphocholine + H2O = a 1-acyl-sn-glycero-3-phosphocholine + a fatty acid + H(+). PLA2 catalyzes the calcium-dependent hydrolysis of the 2-acyl groups in 3-sn-phosphoglycerides. The polypeptide is Acidic phospholipase A2 (Ophiophagus hannah (King cobra)).